The primary structure comprises 287 residues: Fructose-1,6-bisphosphatase class 1 (287 aa).

Residues Glu67, Asp87, Leu89, and Asp90 each coordinate Mg(2+). Residues 90-93, Tyr195, and Lys225 contribute to the substrate site; that span reads DGSS. Residue Glu231 participates in Mg(2+) binding.

It belongs to the FBPase class 1 family. In terms of assembly, homotetramer. It depends on Mg(2+) as a cofactor.

Its subcellular location is the cytoplasm. It catalyses the reaction beta-D-fructose 1,6-bisphosphate + H2O = beta-D-fructose 6-phosphate + phosphate. Its pathway is carbohydrate biosynthesis; gluconeogenesis. The sequence is that of Fructose-1,6-bisphosphatase class 1 from Halobacterium salinarum (strain ATCC 29341 / DSM 671 / R1).